A 251-amino-acid polypeptide reads, in one-letter code: L-xylulose reductase (251 aa).

13 to 42 (LVTGASQGIGKEICLSLAKAGAQVIAFARN) serves as a coordination point for NADP(+). A substrate-binding site is contributed by Ser-143. Tyr-156 (proton acceptor) is an active-site residue. Lys-160 lines the NADP(+) pocket.

The protein belongs to the short-chain dehydrogenases/reductases (SDR) family. In terms of assembly, homotetramer. Expressed in intestine, gonad and spermatids (at protein level). Expressed in intestine, uterine seam, gonadal sheath cells, spermathecal-uterus valve and spermatids.

Its subcellular location is the cell membrane. It carries out the reaction xylitol + NADP(+) = L-xylulose + NADPH + H(+). Strongly inhibited by 10% dimethyl sulfoxide. Catalyzes the NADPH-dependent reduction of L-xylulose, D-xylulose, L-(+) erythrulose, D-erythrose, D-threose, L-ribulose, 1,4-dibromo-2,3-butanedione and 2,3-heptanedione. Also active against isatin, 9,10-phenanthrenequinone, menadione, 2,3-hexaenadione and 3,4-hexahenadione. No activity observed when tested using NADH rather than NADPH. This chain is L-xylulose reductase, found in Caenorhabditis elegans.